A 257-amino-acid polypeptide reads, in one-letter code: 1-(5-phosphoribosyl)-5-[(5-phosphoribosylamino)methylideneamino] imidazole-4-carboxamide isomerase (257 aa).

Asp-8 (proton acceptor) is an active-site residue. Asp-129 (proton donor) is an active-site residue.

It belongs to the HisA/HisF family.

It localises to the cytoplasm. It catalyses the reaction 1-(5-phospho-beta-D-ribosyl)-5-[(5-phospho-beta-D-ribosylamino)methylideneamino]imidazole-4-carboxamide = 5-[(5-phospho-1-deoxy-D-ribulos-1-ylimino)methylamino]-1-(5-phospho-beta-D-ribosyl)imidazole-4-carboxamide. Its pathway is amino-acid biosynthesis; L-histidine biosynthesis; L-histidine from 5-phospho-alpha-D-ribose 1-diphosphate: step 4/9. The polypeptide is 1-(5-phosphoribosyl)-5-[(5-phosphoribosylamino)methylideneamino] imidazole-4-carboxamide isomerase (Cyanothece sp. (strain PCC 7425 / ATCC 29141)).